We begin with the raw amino-acid sequence, 453 residues long: uncharacterized protein (453 aa).

This is an uncharacterized protein from Magallana gigas (Pacific oyster).